Consider the following 705-residue polypeptide: Methionine--tRNA ligase (705 aa).

The 'HIGH' region motif lies at 17–27; the sequence is PYANGPVHLGH. Zn(2+) contacts are provided by Cys-149, Cys-152, Cys-162, and Cys-165. The short motif at 347–351 is the 'KMSKS' region element; the sequence is KFSKS. Lys-350 contacts ATP. Residues 604–705 form the tRNA-binding domain; sequence EFQKVDLRVA…GEGINGQSVQ (102 aa).

This sequence belongs to the class-I aminoacyl-tRNA synthetase family. MetG type 1 subfamily. Homodimer. It depends on Zn(2+) as a cofactor.

It localises to the cytoplasm. It carries out the reaction tRNA(Met) + L-methionine + ATP = L-methionyl-tRNA(Met) + AMP + diphosphate. Is required not only for elongation of protein synthesis but also for the initiation of all mRNA translation through initiator tRNA(fMet) aminoacylation. This chain is Methionine--tRNA ligase, found in Chlorobium chlorochromatii (strain CaD3).